The chain runs to 419 residues: Akuammiline synthase 1 (419 aa).

The active-site Proton acceptor is His-151. Residues 206–213 carry the Nuclear localization signal motif; the sequence is TRRFVFPA. Asp-359 (proton acceptor) is an active-site residue.

This sequence belongs to the plant acyltransferase family. Monomer.

Its subcellular location is the cytoplasm. The protein resides in the nucleus. It catalyses the reaction rhazimol + acetyl-CoA = akuammiline + CoA + H(+). Its pathway is alkaloid biosynthesis. Its function is as follows. Acyltransferase involved in the biosynthesis of akuammilan monoterpene indole alkaloids (MIAs) natural products, components with various biological properties such as antidiabetic, antibacterial, anti-inflammatory, anticancer, and antimalarial activities. Catalyzes the conversion of rhazimol to akuammiline. This chain is Akuammiline synthase 1, found in Alstonia scholaris (Dogbane).